A 100-amino-acid polypeptide reads, in one-letter code: Urease subunit gamma (100 aa).

Belongs to the urease gamma subunit family. As to quaternary structure, heterotrimer of UreA (gamma), UreB (beta) and UreC (alpha) subunits. Three heterotrimers associate to form the active enzyme.

The protein localises to the cytoplasm. The enzyme catalyses urea + 2 H2O + H(+) = hydrogencarbonate + 2 NH4(+). The protein operates within nitrogen metabolism; urea degradation; CO(2) and NH(3) from urea (urease route): step 1/1. In Flavobacterium johnsoniae (strain ATCC 17061 / DSM 2064 / JCM 8514 / BCRC 14874 / CCUG 350202 / NBRC 14942 / NCIMB 11054 / UW101) (Cytophaga johnsonae), this protein is Urease subunit gamma.